The sequence spans 305 residues: Ornithine carbamoyltransferase (305 aa).

Carbamoyl phosphate-binding positions include 50 to 53 (STRT), glutamine 77, arginine 101, and 128 to 131 (HPCQ). L-ornithine contacts are provided by residues asparagine 162, aspartate 220, and 224–225 (SM). Carbamoyl phosphate-binding positions include 260 to 261 (CL) and arginine 288.

It belongs to the aspartate/ornithine carbamoyltransferase superfamily. OTCase family.

The protein resides in the cytoplasm. The catalysed reaction is carbamoyl phosphate + L-ornithine = L-citrulline + phosphate + H(+). The protein operates within amino-acid degradation; L-arginine degradation via ADI pathway; carbamoyl phosphate from L-arginine: step 2/2. In terms of biological role, reversibly catalyzes the transfer of the carbamoyl group from carbamoyl phosphate (CP) to the N(epsilon) atom of ornithine (ORN) to produce L-citrulline. The chain is Ornithine carbamoyltransferase from Akkermansia muciniphila (strain ATCC BAA-835 / DSM 22959 / JCM 33894 / BCRC 81048 / CCUG 64013 / CIP 107961 / Muc).